The sequence spans 211 residues: Endonuclease III (211 aa).

The HhH domain maps to 108–127; that stretch reads REALEALAGVGRKTANVVLN. The [4Fe-4S] cluster site is built by C187, C194, C197, and C203.

The protein belongs to the Nth/MutY family. Requires [4Fe-4S] cluster as cofactor.

It catalyses the reaction 2'-deoxyribonucleotide-(2'-deoxyribose 5'-phosphate)-2'-deoxyribonucleotide-DNA = a 3'-end 2'-deoxyribonucleotide-(2,3-dehydro-2,3-deoxyribose 5'-phosphate)-DNA + a 5'-end 5'-phospho-2'-deoxyribonucleoside-DNA + H(+). Functionally, DNA repair enzyme that has both DNA N-glycosylase activity and AP-lyase activity. The DNA N-glycosylase activity releases various damaged pyrimidines from DNA by cleaving the N-glycosidic bond, leaving an AP (apurinic/apyrimidinic) site. The AP-lyase activity cleaves the phosphodiester bond 3' to the AP site by a beta-elimination, leaving a 3'-terminal unsaturated sugar and a product with a terminal 5'-phosphate. The protein is Endonuclease III of Haemophilus influenzae (strain ATCC 51907 / DSM 11121 / KW20 / Rd).